The following is a 268-amino-acid chain: Purine nucleoside phosphorylase (268 aa).

Phosphate is bound by residues serine 36, histidine 68, 88–90, and alanine 120; that span reads RIH. Glutamate 189 lines the a purine D-ribonucleoside pocket. Serine 208 is a binding site for phosphate. Asparagine 231 serves as a coordination point for a purine D-ribonucleoside.

This sequence belongs to the PNP/MTAP phosphorylase family. In terms of assembly, homotrimer.

It carries out the reaction a purine 2'-deoxy-D-ribonucleoside + phosphate = a purine nucleobase + 2-deoxy-alpha-D-ribose 1-phosphate. Its pathway is purine metabolism; purine nucleoside salvage. Functionally, the purine nucleoside phosphorylases catalyze the phosphorolytic breakdown of the N-glycosidic bond in the beta-(deoxy)ribonucleoside molecules, with the formation of the corresponding free purine bases and pentose-1-phosphate. Cleaves guanosine, inosine, 2'-deoxyguanosine and 2'-deoxyinosine. The chain is Purine nucleoside phosphorylase (punA) from Mycobacterium bovis (strain ATCC BAA-935 / AF2122/97).